A 153-amino-acid polypeptide reads, in one-letter code: Interleukin-17A (153 aa).

The N-terminal stretch at 1-23 is a signal peptide; it reads MTPVRSSSLSLLLLLSLVALVKA. Asn-53 carries N-linked (GlcNAc...) asparagine glycosylation. Intrachain disulfides connect Cys-92/Cys-142 and Cys-97/Cys-144.

This sequence belongs to the IL-17 family. In terms of assembly, homodimer. Forms complexes with IL17RA and IL17RC receptors with 2:1 binding stoichiometry: two receptor chains for one interleukin molecule. IL17A homodimer preferentially drives the formation of IL17RA-IL17RC heterodimeric receptor complex. IL17A homodimer adopts an asymmetrical ternary structure with one IL17RA molecule, allowing for high affinity interactions of one IL17A monomer with one IL17RA molecule (via D1 and D2 domains), while disfavoring binding of a second IL17RA molecule on the other IL17A monomer. Heterodimer with IL17F. IL17A-IL17F forms complexes with IL17RA-IL17RC, but with lower affinity when compared to IL17A homodimer. IL17RA and IL17RC chains cannot distinguish between IL17A and IL17F molecules, potentially enabling the formation of topologically distinct complexes. In terms of tissue distribution, highly expressed in adult heart, skin, and intestinal tissues, such as jejunum and ileum.

The protein localises to the secreted. In terms of biological role, effector cytokine of innate and adaptive immune system involved in antimicrobial host defense and maintenance of tissue integrity. Signals via IL17RA-IL17RC heterodimeric receptor complex, triggering homotypic interaction of IL17RA and IL17RC chains with TRAF3IP2 adapter. This leads to downstream TRAF6-mediated activation of NF-kappa-B and MAPkinase pathways ultimately resulting in transcriptional activation of cytokines, chemokines, antimicrobial peptides and matrix metalloproteinases, with potential strong immune inflammation. Plays an important role in connecting T cell-mediated adaptive immunity and acute inflammatory response to destroy extracellular bacteria and fungi. As a signature effector cytokine of T-helper 17 cells (Th17), primarily induces neutrophil activation and recruitment at infection and inflammatory sites. In airway epithelium, mediates neutrophil chemotaxis via induction of CXCL1 and CXCL5 chemokines. In secondary lymphoid organs, contributes to germinal center formation by regulating the chemotactic response of B cells to CXCL12 and CXCL13, enhancing retention of B cells within the germinal centers, B cell somatic hypermutation rate and selection toward plasma cells. Effector cytokine of a subset of gamma-delta T cells that functions as part of an inflammatory circuit downstream IL1B, TLR2 and IL23A-IL12B to promote neutrophil recruitment for efficient bacterial clearance. Effector cytokine of innate immune cells including invariant natural killer cell (iNKT) and group 3 innate lymphoid cells that mediate initial neutrophilic inflammation. Involved in the maintenance of the integrity of epithelial barriers during homeostasis and pathogen infection. Upon acute injury, has a direct role in epithelial barrier formation by regulating OCLN localization and tight junction biogenesis. As part of the mucosal immune response induced by commensal bacteria, enhances host's ability to resist pathogenic bacterial and fungal infections by promoting neutrophil recruitment and antimicrobial peptides release. In synergy with IL17F, mediates the production of antimicrobial beta-defensins DEFB1, DEFB103A, and DEFB104A by mucosal epithelial cells, limiting the entry of microbes through the epithelial barriers. Involved in antiviral host defense through various mechanisms. Enhances immunity against West Nile virus by promoting T cell cytotoxicity. May play a beneficial role in influenza A virus (H5N1) infection by enhancing B cell recruitment and immune response in the lung. Contributes to influenza A virus (H1N1) clearance by driving the differentiation of B-1a B cells, providing for production of virus-specific IgM antibodies at first line of host defense. The protein is Interleukin-17A (IL17A) of Sus scrofa (Pig).